We begin with the raw amino-acid sequence, 141 residues long: Large ribosomal subunit protein uL11 (141 aa).

This sequence belongs to the universal ribosomal protein uL11 family. Part of the ribosomal stalk of the 50S ribosomal subunit. Interacts with L10 and the large rRNA to form the base of the stalk. L10 forms an elongated spine to which L12 dimers bind in a sequential fashion forming a multimeric L10(L12)X complex. In terms of processing, one or more lysine residues are methylated.

Forms part of the ribosomal stalk which helps the ribosome interact with GTP-bound translation factors. The chain is Large ribosomal subunit protein uL11 from Synechococcus elongatus (strain ATCC 33912 / PCC 7942 / FACHB-805) (Anacystis nidulans R2).